A 420-amino-acid polypeptide reads, in one-letter code: Glucose-1-phosphate adenylyltransferase (420 aa).

Residues tyrosine 107, glycine 172, 187–188 (EK), and serine 205 each bind alpha-D-glucose 1-phosphate.

It belongs to the bacterial/plant glucose-1-phosphate adenylyltransferase family. Homotetramer.

The enzyme catalyses alpha-D-glucose 1-phosphate + ATP + H(+) = ADP-alpha-D-glucose + diphosphate. Its pathway is glycan biosynthesis; glycogen biosynthesis. In terms of biological role, involved in the biosynthesis of ADP-glucose, a building block required for the elongation reactions to produce glycogen. Catalyzes the reaction between ATP and alpha-D-glucose 1-phosphate (G1P) to produce pyrophosphate and ADP-Glc. The sequence is that of Glucose-1-phosphate adenylyltransferase from Rhizobium radiobacter (Agrobacterium tumefaciens).